The primary structure comprises 457 residues: Cysteine--tRNA ligase (457 aa).

C27 serves as a coordination point for Zn(2+). The 'HIGH' region motif lies at 29 to 39 (PTVYDFAHIGN). Residues C211, H236, and E240 each contribute to the Zn(2+) site. The short motif at 269-273 (KMSKS) is the 'KMSKS' region element. K272 serves as a coordination point for ATP.

The protein belongs to the class-I aminoacyl-tRNA synthetase family. In terms of assembly, monomer. It depends on Zn(2+) as a cofactor.

The protein resides in the cytoplasm. The catalysed reaction is tRNA(Cys) + L-cysteine + ATP = L-cysteinyl-tRNA(Cys) + AMP + diphosphate. The protein is Cysteine--tRNA ligase of Ehrlichia ruminantium (strain Welgevonden).